A 987-amino-acid chain; its full sequence is Sarcosine oxidase subunit alpha (987 aa).

NAD(+) is bound by residues Asp-198, Glu-199, Ser-206, Ala-244, and Gly-445. (6R)-5,10-methylene-5,6,7,8-tetrahydrofolate is bound by residues Thr-714 and Glu-806.

It belongs to the GcvT family. Heterotetramer composed of subunits alpha (SoxA), beta (SoxB), gamma (SoxG) and delta (SoxD). The cofactor is NAD(+).

The protein localises to the cytoplasm. It carries out the reaction sarcosine + (6S)-5,6,7,8-tetrahydrofolate + O2 = (6R)-5,10-methylene-5,6,7,8-tetrahydrofolate + glycine + H2O2. The enzyme catalyses sarcosine + O2 + H2O = formaldehyde + glycine + H2O2. Its function is as follows. In the presence of tetrahydrofolate, catalyzes the oxidative demethylation of sarcosine to yield glycine, 5,10-methylenetetrahydrofolate and hydrogen peroxide. In the absence of tetrahydrofolate, catalyzes the oxidative demethylation of sarcosine to yield glycine, formaldehyde and hydrogen peroxide. This is Sarcosine oxidase subunit alpha (soxA) from Rhizobium meliloti (strain 1021) (Ensifer meliloti).